The chain runs to 160 residues: Major pollen allergen Bet v 1-B (160 aa).

Brassinolide is bound by residues lysine 55, tyrosine 82, tyrosine 84, and asparagine 101.

Belongs to the BetVI family.

The protein resides in the cytoplasm. Functionally, may be a general steroid carrier protein. In Betula pendula (European white birch), this protein is Major pollen allergen Bet v 1-B (BETV1B).